Here is a 483-residue protein sequence, read N- to C-terminus: MTKTEINKKDWEINVVVSSEKKLWKAKQDLALSNLAKTLKIKGFRPGKASVEAAKKHLNPEQIQEEAVKLIANDLVKIASESIDESYIVLDSPIYEVEKMSDAELDLKFSYPIYPEFKIKNYKSLKVTLSRAKVSKEDVDSEIEKIREKNALLIKKTKDQGKVAKTDTVNIDYVGKIDGEEFDGGKASSHELVIGSKSFIDNFEDQLIGFKSGDKVEVKVSFPDDYHSSKFAGKKAIFDVKINDVFTKEKPVKNDDLVKFLNNPKLKTLAEMENYFKDLIKNEKDEKSKASFKKDIFEKIMNENEIPVPRLILMKETTNAIREFEKDVKKYGFTVEKYLKMLNMNSKDFVTNLNKESELKLKEALIYTEISKLEKIEAQPEDYDVKYKKFAKLYNVSLDSVKSMITQQQAQVAIVNEKILEFLIKHNAIEKNSVGEEPKLSTTKKVVEPTEEKTRKDSKMSTKKPAAKPAAKPAAATKKPVKK.

The PPIase FKBP-type domain maps to 166 to 251 (TDTVNIDYVG…INDVFTKEKP (86 aa)). Residues 435–460 (GEEPKLSTTKKVVEPTEEKTRKDSKM) are compositionally biased toward basic and acidic residues. The tract at residues 435–483 (GEEPKLSTTKKVVEPTEEKTRKDSKMSTKKPAAKPAAKPAAATKKPVKK) is disordered. Low complexity predominate over residues 467–483 (AKPAAKPAAATKKPVKK).

Belongs to the FKBP-type PPIase family. Tig subfamily.

The protein resides in the cytoplasm. The catalysed reaction is [protein]-peptidylproline (omega=180) = [protein]-peptidylproline (omega=0). Its function is as follows. Involved in protein export. Acts as a chaperone by maintaining the newly synthesized protein in an open conformation. Functions as a peptidyl-prolyl cis-trans isomerase. The polypeptide is Trigger factor (Mycoplasma mobile (strain ATCC 43663 / 163K / NCTC 11711) (Mesomycoplasma mobile)).